The sequence spans 155 residues: 6,7-dimethyl-8-ribityllumazine synthase (155 aa).

5-amino-6-(D-ribitylamino)uracil-binding positions include Phe-23, 57–59, and 81–83; these read AFE and AVI. Position 86–87 (86–87) interacts with (2S)-2-hydroxy-3-oxobutyl phosphate; it reads ST. His-89 acts as the Proton donor in catalysis. Phe-114 provides a ligand contact to 5-amino-6-(D-ribitylamino)uracil. Arg-128 is a (2S)-2-hydroxy-3-oxobutyl phosphate binding site.

This sequence belongs to the DMRL synthase family.

The enzyme catalyses (2S)-2-hydroxy-3-oxobutyl phosphate + 5-amino-6-(D-ribitylamino)uracil = 6,7-dimethyl-8-(1-D-ribityl)lumazine + phosphate + 2 H2O + H(+). The protein operates within cofactor biosynthesis; riboflavin biosynthesis; riboflavin from 2-hydroxy-3-oxobutyl phosphate and 5-amino-6-(D-ribitylamino)uracil: step 1/2. In terms of biological role, catalyzes the formation of 6,7-dimethyl-8-ribityllumazine by condensation of 5-amino-6-(D-ribitylamino)uracil with 3,4-dihydroxy-2-butanone 4-phosphate. This is the penultimate step in the biosynthesis of riboflavin. The chain is 6,7-dimethyl-8-ribityllumazine synthase from Trichlorobacter lovleyi (strain ATCC BAA-1151 / DSM 17278 / SZ) (Geobacter lovleyi).